The following is a 129-amino-acid chain: Follitropin subunit beta (129 aa).

The first 20 residues, 1-20 (MKTLQFFFLFCCWKAICCNS), serve as a signal peptide directing secretion. 6 disulfides stabilise this stretch: cysteine 21–cysteine 69, cysteine 35–cysteine 84, cysteine 38–cysteine 122, cysteine 46–cysteine 100, cysteine 50–cysteine 102, and cysteine 105–cysteine 112. N-linked (GlcNAc...) asparagine glycans are attached at residues asparagine 25 and asparagine 42.

This sequence belongs to the glycoprotein hormones subunit beta family. As to quaternary structure, heterodimer. The active follitropin is a heterodimer composed of an alpha chain/CGA shared with other hormones and a unique beta chain/FSHB shown here.

It is found in the secreted. In terms of biological role, together with the alpha chain CGA constitutes follitropin, the follicle-stimulating hormone, and provides its biological specificity to the hormone heterodimer. Binds FSHR, a G protein-coupled receptor, on target cells to activate downstream signaling pathways. Follitropin is involved in follicle development and spermatogenesis in reproductive organs. The protein is Follitropin subunit beta (FSHB) of Pan troglodytes (Chimpanzee).